A 265-amino-acid polypeptide reads, in one-letter code: Diphthine synthase (265 aa).

S-adenosyl-L-methionine-binding positions include leucine 9, aspartate 85, isoleucine 88, threonine 113–alanine 114, leucine 168, alanine 211, and histidine 236.

Belongs to the diphthine synthase family. Homodimer.

It carries out the reaction 2-[(3S)-amino-3-carboxypropyl]-L-histidyl-[translation elongation factor 2] + 3 S-adenosyl-L-methionine = diphthine-[translation elongation factor 2] + 3 S-adenosyl-L-homocysteine + 3 H(+). The protein operates within protein modification; peptidyl-diphthamide biosynthesis. Its function is as follows. S-adenosyl-L-methionine-dependent methyltransferase that catalyzes the trimethylation of the amino group of the modified target histidine residue in translation elongation factor 2 (EF-2), to form an intermediate called diphthine. The three successive methylation reactions represent the second step of diphthamide biosynthesis. This is Diphthine synthase from Halorubrum lacusprofundi (strain ATCC 49239 / DSM 5036 / JCM 8891 / ACAM 34).